A 127-amino-acid polypeptide reads, in one-letter code: Large-conductance mechanosensitive channel (127 aa).

3 consecutive transmembrane segments (helical) span residues 9–29 (EFAM…GVAF), 32–52 (IVTA…LGGI), and 75–95 (VIDF…INLL).

It belongs to the MscL family. Homopentamer.

It localises to the cell inner membrane. In terms of biological role, channel that opens in response to stretch forces in the membrane lipid bilayer. May participate in the regulation of osmotic pressure changes within the cell. In Legionella pneumophila subsp. pneumophila (strain Philadelphia 1 / ATCC 33152 / DSM 7513), this protein is Large-conductance mechanosensitive channel.